We begin with the raw amino-acid sequence, 145 residues long: Transcriptional anti-antiactivator ExsC (145 aa).

Homodimer. Interacts with ExsE. Interacts directly with ExsD to form a heterotetrameric complex.

The protein resides in the cytoplasm. Its activity is regulated as follows. In the absence of inducing signals, ExsE interacts with and inhibits ExsC activity. Part of the regulatory cascade that plays a role in the transcriptional regulation of the type III secretion system (T3SS). Interacts with antiactivator ExsD to inhibit its activity leading to ExsA-mediated transcription. The polypeptide is Transcriptional anti-antiactivator ExsC (exsC) (Pseudomonas aeruginosa (strain ATCC 15692 / DSM 22644 / CIP 104116 / JCM 14847 / LMG 12228 / 1C / PRS 101 / PAO1)).